Reading from the N-terminus, the 74-residue chain is Antimicrobial peptide 2 (74 aa).

Residues M1–A22 form the signal peptide. K40 carries the lysine amide modification. Residues D46 to Y74 constitute a propeptide that is removed on maturation.

Expressed by the venom gland.

Its subcellular location is the secreted. The protein localises to the target cell membrane. Its function is as follows. Has antibacterial activity against the Gram-positive bacteria S.aureus (MIC=48 uM), the Gram-negative bacteria E.coli (MIC=120 uM), and the yeast C.albicans (MIC=64 uM). Causes hemolysis on horse erythrocytes. This Androctonus amoreuxi (African fattail scorpion) protein is Antimicrobial peptide 2.